The chain runs to 460 residues: Proline--tRNA ligase (460 aa).

It belongs to the class-II aminoacyl-tRNA synthetase family. ProS type 3 subfamily. Homodimer.

Its subcellular location is the cytoplasm. The catalysed reaction is tRNA(Pro) + L-proline + ATP = L-prolyl-tRNA(Pro) + AMP + diphosphate. Its function is as follows. Catalyzes the attachment of proline to tRNA(Pro) in a two-step reaction: proline is first activated by ATP to form Pro-AMP and then transferred to the acceptor end of tRNA(Pro). The sequence is that of Proline--tRNA ligase from Methanococcus maripaludis (strain C6 / ATCC BAA-1332).